The following is a 193-amino-acid chain: Rho-related protein racB (193 aa).

GTP is bound by residues Ala13, Gly15, Lys16, Thr17, Cys18, Tyr32, Thr35, Gly60, Lys116, Asp118, and Ala159. Residue Thr17 participates in Mg(2+) binding. Short sequence motifs (switch) lie at residues 26–37 (NAFPTEYVPTVF) and 57–75 (DTAG…YPQT). Thr35 serves as a coordination point for Mg(2+). Cys190 is modified (cysteine methyl ester). The S-geranylgeranyl cysteine moiety is linked to residue Cys190. A propeptide spans 191–193 (LIF) (removed in mature form).

The protein belongs to the small GTPase superfamily. Rho family. Mg(2+) is required as a cofactor.

It localises to the cell membrane. It is found in the cytoplasm. The protein localises to the cytoskeleton. It catalyses the reaction GTP + H2O = GDP + phosphate + H(+). With respect to regulation, regulated by guanine nucleotide exchange factors (GEFs) which promote the exchange of bound GDP for free GTP, GTPase activating proteins (GAPs) which increase the GTP hydrolysis activity, and GDP dissociation inhibitors which inhibit the dissociation of the nucleotide from the GTPase. Functionally, small GTPase which cycles between active GTP-bound and inactive GDP-bound states. The protein is Rho-related protein racB of Entamoeba histolytica (strain ATCC 30459 / HM-1:IMSS / ABRM).